A 174-amino-acid chain; its full sequence is tRNA (cytidine(56)-2'-O)-methyltransferase (174 aa).

S-adenosyl-L-methionine contacts are provided by residues Leu83, 108–112 (GAEKV), and 126–133 (VGNQPHSE).

Belongs to the aTrm56 family. In terms of assembly, homodimer.

It localises to the cytoplasm. The catalysed reaction is cytidine(56) in tRNA + S-adenosyl-L-methionine = 2'-O-methylcytidine(56) in tRNA + S-adenosyl-L-homocysteine + H(+). Its function is as follows. Specifically catalyzes the AdoMet-dependent 2'-O-ribose methylation of cytidine at position 56 in tRNAs. This Methanothrix thermoacetophila (strain DSM 6194 / JCM 14653 / NBRC 101360 / PT) (Methanosaeta thermophila) protein is tRNA (cytidine(56)-2'-O)-methyltransferase.